A 305-amino-acid polypeptide reads, in one-letter code: MKASVSLLLLSAASMASAAMSVSQCAQMCLSNMKAKAGELGCSAGDDKCLCSQANYGYGIRDCTTEACPDDDAIAVLSSALSSCPSDSAAVTATGAGGSSSGSGSGSDSGSGSGSGSGSGSGSGSGSGSSSGSGSGSGSGSGSGSGSNSGSGSASSTATGTATGTATGTATGTATGTATGSENSTTGGAGAGAGAGASSTGTNASGTGATTSGANPSNTGATTTDTTLTTTTTSSENGSSTGNSSSETGAGSGSSTATGSGSGSGAGSASTTAPNSSSTGNVAPRGAVVGSGAVGALALAALIIL.

An N-terminal signal peptide occupies residues 1-18 (MKASVSLLLLSAASMASA). The CFEM domain occupies 19 to 111 (AMSVSQCAQM…GSGSGSDSGS (93 aa)). Cystine bridges form between Cys-25–Cys-68, Cys-29–Cys-63, Cys-42–Cys-49, and Cys-51–Cys-84. A heme-binding site is contributed by Asp-46. Residues 92 to 287 (TATGAGGSSS…STGNVAPRGA (196 aa)) form a disordered region. The span at 95-149 (GAGGSSSGSGSGSDSGSGSGSGSGSGSGSGSGSGSSSGSGSGSGSGSGSGSGSNS) shows a compositional bias: gly residues. Low complexity-rich tracts occupy residues 150–186 (GSGS…NSTT), 196–259 (GASS…TATG), and 267–287 (GSAS…PRGA). 5 N-linked (GlcNAc...) asparagine glycosylation sites follow: Asn-183, Asn-203, Asn-237, Asn-243, and Asn-275. Ser-276 carries the GPI-like-anchor amidated serine lipid modification. A propeptide spans 277–305 (SSTGNVAPRGAVVGSGAVGALALAALIIL) (removed in mature form).

Belongs to the RBT5 family. The GPI-like anchor contains a phosphoceramide lipid group. Post-translationally, the GPI-anchor is attached to the protein in the endoplasmic reticulum and serves to target the protein to the cell surface. There, the glucosamine-inositol phospholipid moiety is cleaved off and the GPI-modified mannoprotein is covalently attached via its lipidless GPI glycan remnant to the 1,6-beta-glucan of the outer cell wall layer.

The protein resides in the secreted. The protein localises to the cell wall. It is found in the cell membrane. Its function is as follows. GPI-anchored cell wall protein involved in stabilizing the cell wall. Not implicated in virulence, heme uptake and biofilm formation. The sequence is that of GPI-anchored hemophore cfmA from Aspergillus fumigatus (strain ATCC MYA-4609 / CBS 101355 / FGSC A1100 / Af293) (Neosartorya fumigata).